The primary structure comprises 482 residues: Reduced viability upon starvation protein 167 (482 aa).

Position 2 is an N-acetylserine (serine 2). Positions 17-254 (FRQKFKMGEQ…YFDLNSDIVE (238 aa)) constitute a BAR domain. Coiled coils occupy residues 31–64 (VYED…NGML) and 174–204 (AKDE…LKTQ). A Glycyl lysine isopeptide (Lys-Gly) (interchain with G-Cter in ubiquitin) cross-link involves residue lysine 242. Residues serine 299, serine 321, and serine 379 each carry the phosphoserine; by FUS3 and PHO85 modification. The segment at 382–407 (LTGLGFQQSPQQQQGPPPAYSNPLTS) is disordered. Residues 421–482 (PGVETVTALY…PGNYVQLNKN (62 aa)) enclose the SH3 domain. Lysine 481 participates in a covalent cross-link: Glycyl lysine isopeptide (Lys-Gly) (interchain with G-Cter in ubiquitin).

In terms of assembly, binds to actin. Interacts with ABP1, GYL1, GYP5, PCL2 and YBR108W. In terms of processing, phosphorylated redundantly by cyclin-dependent kinase PHO85 in association with PCL1,2-type cyclins or by MAP kinase FUS3. Phosphorylation inhibits interaction with complexes involved in actin cytoskeleton function.

Its subcellular location is the cytoplasm. It localises to the cytoskeleton. Functionally, component of a cytoskeletal structure that is required for the formation of endocytic vesicles at the plasma membrane level. Could be implicated in cytoskeletal reorganization in response to environmental stresses and could act in the budding site selection mechanism. The polypeptide is Reduced viability upon starvation protein 167 (RVS167) (Saccharomyces cerevisiae (strain ATCC 204508 / S288c) (Baker's yeast)).